A 214-amino-acid chain; its full sequence is Probable GTP-binding protein EngB (214 aa).

The EngB-type G domain occupies 22–194 (HLPEIAFAGR…WARIDALLEP (173 aa)). GTP contacts are provided by residues 30-37 (GRSNVGKS), 57-61 (GRTQL), 75-78 (DLPG), 142-145 (TKCD), and 173-175 (FSA). Mg(2+)-binding residues include serine 37 and threonine 59. The interval 195–214 (TAAETPGIPEEPAPPGPVND) is disordered. Residues 203 to 214 (PEEPAPPGPVND) show a composition bias toward pro residues.

The protein belongs to the TRAFAC class TrmE-Era-EngA-EngB-Septin-like GTPase superfamily. EngB GTPase family. The cofactor is Mg(2+).

Necessary for normal cell division and for the maintenance of normal septation. In Geobacter sp. (strain M21), this protein is Probable GTP-binding protein EngB.